A 491-amino-acid chain; its full sequence is Glutamyl-tRNA(Gln) amidotransferase subunit A (491 aa).

Active-site charge relay system residues include Lys-78 and Ser-158. Ser-182 serves as the catalytic Acyl-ester intermediate.

Belongs to the amidase family. GatA subfamily. Heterotrimer of A, B and C subunits.

The catalysed reaction is L-glutamyl-tRNA(Gln) + L-glutamine + ATP + H2O = L-glutaminyl-tRNA(Gln) + L-glutamate + ADP + phosphate + H(+). Its function is as follows. Allows the formation of correctly charged Gln-tRNA(Gln) through the transamidation of misacylated Glu-tRNA(Gln) in organisms which lack glutaminyl-tRNA synthetase. The reaction takes place in the presence of glutamine and ATP through an activated gamma-phospho-Glu-tRNA(Gln). The protein is Glutamyl-tRNA(Gln) amidotransferase subunit A of Nitrobacter hamburgensis (strain DSM 10229 / NCIMB 13809 / X14).